Consider the following 147-residue polypeptide: Large ribosomal subunit protein uL15 (147 aa).

The segment covering 1 to 13 (MELHSLKAAEGSR) has biased composition (basic and acidic residues). Residues 1–57 (MELHSLKAAEGSRKVRNRVGRGTSSGNGKTSGRGQKGQKSRSGGGVRPGFEGGQTEL) form a disordered region. Composition is skewed to gly residues over residues 23 to 35 (TSSGNGKTSGRGQ) and 42 to 52 (SGGGVRPGFEG).

The protein belongs to the universal ribosomal protein uL15 family. Part of the 50S ribosomal subunit.

In terms of biological role, binds to the 23S rRNA. The protein is Large ribosomal subunit protein uL15 of Lactococcus lactis subsp. lactis (strain IL1403) (Streptococcus lactis).